Reading from the N-terminus, the 124-residue chain is MLVIILGVIGLLANQVLGLPTQAGGHLRSTDNPPQEELGYWCTYMESCKFCWECAHGICKNKVNESMPLIIENSYLTSCEVSRWYNQCTYSEGNGHYHVMDCSDPVPHNRPHRLLMKIYEKEDL.

The first 28 residues, 1–28, serve as a signal peptide directing secretion; it reads MLVIILGVIGLLANQVLGLPTQAGGHLR.

The protein belongs to the asfivirus MGF 110 family.

Its function is as follows. Plays a role in virus cell tropism, and may be required for efficient virus replication in macrophages. The chain is Protein MGF 110-5L from Ornithodoros (relapsing fever ticks).